The sequence spans 337 residues: Heat-inducible transcription repressor HrcA (337 aa).

Belongs to the HrcA family.

Functionally, negative regulator of class I heat shock genes (grpE-dnaK-dnaJ and groELS operons). Prevents heat-shock induction of these operons. This chain is Heat-inducible transcription repressor HrcA, found in Pseudarthrobacter chlorophenolicus (strain ATCC 700700 / DSM 12829 / CIP 107037 / JCM 12360 / KCTC 9906 / NCIMB 13794 / A6) (Arthrobacter chlorophenolicus).